A 509-amino-acid chain; its full sequence is Thymus-specific serine protease (509 aa).

Positions 1 to 22 are cleaved as a signal peptide; that stretch reads MAVKAPWLGFLLLVSLWGLSTP. 2 N-linked (GlcNAc...) asparagine glycosylation sites follow: asparagine 69 and asparagine 171. Catalysis depends on serine 184, which acts as the Charge relay system. N-linked (GlcNAc...) asparagine glycosylation is present at asparagine 320. Catalysis depends on charge relay system residues aspartate 446 and histidine 471.

The protein belongs to the peptidase S28 family. Expressed predominantly in cortical thymic epithelial cells, with highest expression around vessels and the thymic capsule.

The protein localises to the cytoplasmic vesicle. Functionally, protease that may play a role in T-cell development. This is Thymus-specific serine protease (Prss16) from Mus musculus (Mouse).